The sequence spans 386 residues: Putative aminotransferase YugH (386 aa).

Lysine 234 carries the N6-(pyridoxal phosphate)lysine modification.

This sequence belongs to the class-I pyridoxal-phosphate-dependent aminotransferase family. Pyridoxal 5'-phosphate serves as cofactor.

The protein resides in the cytoplasm. This Bacillus subtilis (strain 168) protein is Putative aminotransferase YugH (yugH).